Reading from the N-terminus, the 142-residue chain is Putative FK506-binding protein 9-like protein (142 aa).

One can recognise a PPIase FKBP-type domain in the interval methionine 1–valine 49. 2 consecutive EF-hand domains span residues tryptophan 60–serine 95 and aspartate 105–aspartate 140. The Ca(2+) site is built by aspartate 118, asparagine 120, aspartate 122, lysine 124, and glutamate 129.

The chain is Putative FK506-binding protein 9-like protein (FKBP9P1) from Homo sapiens (Human).